We begin with the raw amino-acid sequence, 166 residues long: Small ribosomal subunit protein uS5 (166 aa).

One can recognise an S5 DRBM domain in the interval 11–74 (LEDRVVAINR…DAARKNLIEV (64 aa)).

It belongs to the universal ribosomal protein uS5 family. As to quaternary structure, part of the 30S ribosomal subunit. Contacts proteins S4 and S8.

In terms of biological role, with S4 and S12 plays an important role in translational accuracy. Functionally, located at the back of the 30S subunit body where it stabilizes the conformation of the head with respect to the body. This is Small ribosomal subunit protein uS5 from Ligilactobacillus salivarius (strain UCC118) (Lactobacillus salivarius).